Consider the following 668-residue polypeptide: Methionine--tRNA ligase (668 aa).

The 'HIGH' region motif lies at 11–21 (AYTNGPLHIGH). Zn(2+) contacts are provided by cysteine 146, cysteine 149, cysteine 159, and cysteine 162. Positions 332–336 (KMSTS) match the 'KMSKS' region motif. Residue threonine 335 participates in ATP binding. Positions 567–668 (EFNRLDLRVG…REVEPGERIR (102 aa)) constitute a tRNA-binding domain.

Belongs to the class-I aminoacyl-tRNA synthetase family. MetG type 1 subfamily. As to quaternary structure, homodimer. Requires Zn(2+) as cofactor.

It localises to the cytoplasm. The enzyme catalyses tRNA(Met) + L-methionine + ATP = L-methionyl-tRNA(Met) + AMP + diphosphate. Functionally, is required not only for elongation of protein synthesis but also for the initiation of all mRNA translation through initiator tRNA(fMet) aminoacylation. This Methanopyrus kandleri (strain AV19 / DSM 6324 / JCM 9639 / NBRC 100938) protein is Methionine--tRNA ligase.